An 810-amino-acid chain; its full sequence is LPS-assembly protein LptD (810 aa).

An N-terminal signal peptide occupies residues 1 to 29; that stretch reads MTKWTLGYSYPIALTISLIPALTPAIVQA.

This sequence belongs to the LptD family. In terms of assembly, component of the lipopolysaccharide transport and assembly complex. Interacts with LptE and LptA.

The protein localises to the cell outer membrane. Its function is as follows. Together with LptE, is involved in the assembly of lipopolysaccharide (LPS) at the surface of the outer membrane. This is LPS-assembly protein LptD from Aeromonas salmonicida (strain A449).